Reading from the N-terminus, the 187-residue chain is Elongation factor P (187 aa).

It belongs to the elongation factor P family.

Its subcellular location is the cytoplasm. It participates in protein biosynthesis; polypeptide chain elongation. Involved in peptide bond synthesis. Stimulates efficient translation and peptide-bond synthesis on native or reconstituted 70S ribosomes in vitro. Probably functions indirectly by altering the affinity of the ribosome for aminoacyl-tRNA, thus increasing their reactivity as acceptors for peptidyl transferase. This is Elongation factor P from Corynebacterium efficiens (strain DSM 44549 / YS-314 / AJ 12310 / JCM 11189 / NBRC 100395).